The following is a 124-amino-acid chain: Large ribosomal subunit protein bL21 (124 aa).

It belongs to the bacterial ribosomal protein bL21 family. Part of the 50S ribosomal subunit. Contacts protein L20.

In terms of biological role, this protein binds to 23S rRNA in the presence of protein L20. This Synechocystis sp. (strain ATCC 27184 / PCC 6803 / Kazusa) protein is Large ribosomal subunit protein bL21.